Consider the following 342-residue polypeptide: uncharacterized protein (342 aa).

Arginine 69 is a binding site for substrate. The Proton donor role is filled by histidine 176. Aspartate 240 serves as a coordination point for substrate.

It belongs to the aldose epimerase family.

This is an uncharacterized protein from Saccharomyces cerevisiae (strain ATCC 204508 / S288c) (Baker's yeast).